A 157-amino-acid chain; its full sequence is uncharacterized protein (157 aa).

The disordered stretch occupies residues 1-157; the sequence is MNRGPPLRSR…SFSFLVPSNS (157 aa). The segment covering 8–31 has biased composition (pro residues); it reads RSRPPSSPPPASAFPGPSPFPSPS. Residues 62 to 71 are compositionally biased toward basic residues; the sequence is RTSHPPRCPH. Pro residues predominate over residues 76-95; the sequence is PSAPSPPFTPPHPLPTPTPS. Composition is skewed to low complexity over residues 96–117 and 124–157; these read SSPRSPWLSLAPLPTSSASLAS and SFSSPSSPSTSPLSPSSSSFPSSSSFSFLVPSNS.

This is an uncharacterized protein from Vitis vinifera (Grape).